Here is a 382-residue protein sequence, read N- to C-terminus: Alcohol dehydrogenase 1 (382 aa).

Zn(2+) is bound by residues Cys49, Thr51, His71, Cys101, Cys104, Cys107, Cys115, and Cys179. An alcohol contacts are provided by Thr51 and His71. Thr51 is an NAD(+) binding site. NAD(+) is bound by residues 204-209 (GLGAVG), Asp228, Arg233, Thr275, Val298, 298-300 (VGV), Phe325, and Arg375.

This sequence belongs to the zinc-containing alcohol dehydrogenase family. As to quaternary structure, homodimer. Zn(2+) is required as a cofactor.

The protein resides in the cytoplasm. The catalysed reaction is a primary alcohol + NAD(+) = an aldehyde + NADH + H(+). The enzyme catalyses a secondary alcohol + NAD(+) = a ketone + NADH + H(+). Functionally, this protein is responsible for the conversion of alcohols to aldehydes in plants and is important for NAD metabolism during anaerobic respiration. The protein is Alcohol dehydrogenase 1 (ADH1) of Petunia hybrida (Petunia).